A 337-amino-acid chain; its full sequence is Inositol 2-dehydrogenase (337 aa).

This sequence belongs to the Gfo/Idh/MocA family. In terms of assembly, homotetramer.

The enzyme catalyses myo-inositol + NAD(+) = scyllo-inosose + NADH + H(+). Its function is as follows. Involved in the oxidation of myo-inositol (MI) to 2-keto-myo-inositol (2KMI or 2-inosose). The protein is Inositol 2-dehydrogenase of Ralstonia nicotianae (strain ATCC BAA-1114 / GMI1000) (Ralstonia solanacearum).